We begin with the raw amino-acid sequence, 165 residues long: NADPH-dependent 7-cyano-7-deazaguanine reductase (165 aa).

The active-site Thioimide intermediate is the Cys-56. The active-site Proton donor is the Asp-63. Residues 78 to 80 and 97 to 98 contribute to the substrate site; these read VES and HE.

This sequence belongs to the GTP cyclohydrolase I family. QueF type 1 subfamily.

The protein localises to the cytoplasm. The enzyme catalyses 7-aminomethyl-7-carbaguanine + 2 NADP(+) = 7-cyano-7-deazaguanine + 2 NADPH + 3 H(+). Its pathway is tRNA modification; tRNA-queuosine biosynthesis. Functionally, catalyzes the NADPH-dependent reduction of 7-cyano-7-deazaguanine (preQ0) to 7-aminomethyl-7-deazaguanine (preQ1). This Bacillus pumilus (strain SAFR-032) protein is NADPH-dependent 7-cyano-7-deazaguanine reductase.